Consider the following 455-residue polypeptide: Growth/differentiation factor 9 (455 aa).

Positions 1–24 (MALPNKFLLWFYCFAWLCFPVSLG) are cleaved as a signal peptide. Positions 25–320 (SQASGGDAQI…GRSSHHRHRR (296 aa)) are excised as a propeptide. N-linked (GlcNAc...) asparagine glycans are attached at residues N106, N163, N236, N255, and N269. The disordered stretch occupies residues 305–328 (EDAAEDGRSSHHRHRRGQETVSSE). N339 is a glycosylation site (N-linked (GlcNAc...) asparagine). Disulfide bonds link C354–C420, C383–C452, and C387–C454.

Belongs to the TGF-beta family. In terms of assembly, homodimer or heterodimer (Potential). But, in contrast to other members of this family, cannot be disulfide-linked. Post-translationally, phosphorylated; phosphorylation is critical for GDF9 function.

The protein resides in the secreted. In terms of biological role, required for ovarian folliculogenesis. This Papio anubis (Olive baboon) protein is Growth/differentiation factor 9 (GDF9).